The primary structure comprises 85 residues: ATP synthase subunit c (85 aa).

2 helical membrane-spanning segments follow: residues 10 to 30 and 53 to 73; these read IAVA…FGLL and FIVA…ALFF.

The protein belongs to the ATPase C chain family. F-type ATPases have 2 components, F(1) - the catalytic core - and F(0) - the membrane proton channel. F(1) has five subunits: alpha(3), beta(3), gamma(1), delta(1), epsilon(1). F(0) has three main subunits: a(1), b(2) and c(10-14). The alpha and beta chains form an alternating ring which encloses part of the gamma chain. F(1) is attached to F(0) by a central stalk formed by the gamma and epsilon chains, while a peripheral stalk is formed by the delta and b chains.

It is found in the cell inner membrane. Functionally, f(1)F(0) ATP synthase produces ATP from ADP in the presence of a proton or sodium gradient. F-type ATPases consist of two structural domains, F(1) containing the extramembraneous catalytic core and F(0) containing the membrane proton channel, linked together by a central stalk and a peripheral stalk. During catalysis, ATP synthesis in the catalytic domain of F(1) is coupled via a rotary mechanism of the central stalk subunits to proton translocation. In terms of biological role, key component of the F(0) channel; it plays a direct role in translocation across the membrane. A homomeric c-ring of between 10-14 subunits forms the central stalk rotor element with the F(1) delta and epsilon subunits. This Pseudomonas syringae pv. syringae (strain B728a) protein is ATP synthase subunit c.